The following is a 121-amino-acid chain: Large ribosomal subunit protein bL12 (121 aa).

The protein belongs to the bacterial ribosomal protein bL12 family. As to quaternary structure, homodimer. Part of the ribosomal stalk of the 50S ribosomal subunit. Forms a multimeric L10(L12)X complex, where L10 forms an elongated spine to which 2 to 4 L12 dimers bind in a sequential fashion. Binds GTP-bound translation factors.

Functionally, forms part of the ribosomal stalk which helps the ribosome interact with GTP-bound translation factors. Is thus essential for accurate translation. In Clostridium perfringens (strain 13 / Type A), this protein is Large ribosomal subunit protein bL12.